We begin with the raw amino-acid sequence, 276 residues long: Urease accessory protein UreD (276 aa).

This sequence belongs to the UreD family. In terms of assembly, ureD, UreF and UreG form a complex that acts as a GTP-hydrolysis-dependent molecular chaperone, activating the urease apoprotein by helping to assemble the nickel containing metallocenter of UreC. The UreE protein probably delivers the nickel.

The protein localises to the cytoplasm. Its function is as follows. Required for maturation of urease via the functional incorporation of the urease nickel metallocenter. In Albidiferax ferrireducens (strain ATCC BAA-621 / DSM 15236 / T118) (Rhodoferax ferrireducens), this protein is Urease accessory protein UreD.